The following is a 245-amino-acid chain: Flagellar basal-body rod protein FlgF (245 aa).

Belongs to the flagella basal body rod proteins family. The basal body constitutes a major portion of the flagellar organelle and consists of five rings (E,L,P,S, and M) mounted on a central rod. The rod consists of about 26 subunits of FlgG in the distal portion, and FlgB, FlgC and FlgF are thought to build up the proximal portion of the rod with about 6 subunits each.

It is found in the bacterial flagellum basal body. This is Flagellar basal-body rod protein FlgF (flgF) from Caulobacter vibrioides (strain ATCC 19089 / CIP 103742 / CB 15) (Caulobacter crescentus).